A 183-amino-acid chain; its full sequence is Outer membrane protein H.8 (183 aa).

The first 17 residues, 1–17, serve as a signal peptide directing secretion; it reads MKAYLALISAAVIGLAA. C18 carries N-palmitoyl cysteine lipidation. The S-diacylglycerol cysteine moiety is linked to residue C18. The disordered stretch occupies residues 27-51; the sequence is AEATPAGEAPASEAPAAEAAPADAA. A Plastocyanin-like domain is found at 57-183; sequence GNCAATVESN…LMNGKVTLVD (127 aa). Positions 102, 166, 171, and 175 each coordinate Cu cation.

Cu cation is required as a cofactor.

Its subcellular location is the cell outer membrane. This is Outer membrane protein H.8 from Neisseria gonorrhoeae.